The sequence spans 142 residues: Large ribosomal subunit protein uL13 (142 aa).

This sequence belongs to the universal ribosomal protein uL13 family. In terms of assembly, part of the 50S ribosomal subunit.

This protein is one of the early assembly proteins of the 50S ribosomal subunit, although it is not seen to bind rRNA by itself. It is important during the early stages of 50S assembly. The chain is Large ribosomal subunit protein uL13 from Pseudomonas syringae pv. syringae (strain B728a).